Here is a 509-residue protein sequence, read N- to C-terminus: Putative thymidine phosphorylase (509 aa).

Belongs to the thymidine/pyrimidine-nucleoside phosphorylase family. Type 2 subfamily.

The catalysed reaction is thymidine + phosphate = 2-deoxy-alpha-D-ribose 1-phosphate + thymine. This chain is Putative thymidine phosphorylase, found in Bradyrhizobium sp. (strain ORS 278).